A 341-amino-acid polypeptide reads, in one-letter code: tRNA N6-adenosine threonylcarbamoyltransferase (341 aa).

Fe cation contacts are provided by H111 and H115. Substrate contacts are provided by residues 134–138, D167, G180, and N270; that span reads LVSGG. Residue D298 participates in Fe cation binding.

This sequence belongs to the KAE1 / TsaD family. It depends on Fe(2+) as a cofactor.

Its subcellular location is the cytoplasm. It catalyses the reaction L-threonylcarbamoyladenylate + adenosine(37) in tRNA = N(6)-L-threonylcarbamoyladenosine(37) in tRNA + AMP + H(+). In terms of biological role, required for the formation of a threonylcarbamoyl group on adenosine at position 37 (t(6)A37) in tRNAs that read codons beginning with adenine. Is involved in the transfer of the threonylcarbamoyl moiety of threonylcarbamoyl-AMP (TC-AMP) to the N6 group of A37, together with TsaE and TsaB. TsaD likely plays a direct catalytic role in this reaction. This is tRNA N6-adenosine threonylcarbamoyltransferase from Thiobacillus denitrificans (strain ATCC 25259 / T1).